A 207-amino-acid polypeptide reads, in one-letter code: TM2 domain-containing protein 1 (207 aa).

The first 37 residues, 1-37 (MAAAWPSGPSAPEAVTARLVGVLWFVSVTTGPWGAVA), serve as a signal peptide directing secretion. At 40–128 (AGGEESLKCE…YSYKVAVALS (89 aa)) the chain is on the extracellular side. Asn72, Asn75, Asn87, and Asn96 each carry an N-linked (GlcNAc...) asparagine glycan. Residues 118–166 (GYSYKVAVALSLFLGWLGADRFYLGYPALGLLKFCTVGFCGIGSLIDFI) enclose the TM2 domain. The helical transmembrane segment at 129 to 149 (LFLGWLGADRFYLGYPALGLL) threads the bilayer. The Cytoplasmic segment spans residues 150–153 (KFCT). A helical membrane pass occupies residues 154-174 (VGFCGIGSLIDFILISMQIVG). The Extracellular portion of the chain corresponds to 175–207 (PSDGSSYIIDYYGTRLTRLSITNETFRKTQLYP). Asn197 is a glycosylation site (N-linked (GlcNAc...) asparagine).

It belongs to the TM2 family. As to quaternary structure, interacts with APP beta-APP42 (amyloid-beta protein 42). In terms of processing, N-glycosylated. In terms of tissue distribution, widely expressed.

It is found in the membrane. In terms of biological role, may participate in amyloid-beta-induced apoptosis via its interaction with beta-APP42. The polypeptide is TM2 domain-containing protein 1 (TM2D1) (Homo sapiens (Human)).